A 355-amino-acid chain; its full sequence is Green-sensitive opsin-1 (355 aa).

Over 1-49 (MAAHADEPVFAARRYNEETTRESAFVYTNANNTRDPFEGPNYHIAPRWV) the chain is Extracellular. N-linked (GlcNAc...) asparagine glycosylation occurs at N31. The chain crosses the membrane as a helical span at residues 50-74 (YNLASLWMIIVVIASIFTNSLVIVA). Residues 75–86 (TAKFKKLRHPLN) are Cytoplasmic-facing. The chain crosses the membrane as a helical span at residues 87-112 (WILVNLAIADLGETVLASTISVFNQV). Topologically, residues 113–126 (FGYFVLGHPMCIFE) are extracellular. C123 and C200 are joined by a disulfide. The chain crosses the membrane as a helical span at residues 127–146 (GWTVSVCGITALWSLTIISW). Topologically, residues 147 to 165 (ERWVVVCKPFGNVKFDGKW) are cytoplasmic. A helical transmembrane segment spans residues 166-189 (AAGGIIFAWTWAIIWCTPPIFGWS). The Extracellular portion of the chain corresponds to 190 to 215 (RYWPHGLKTSCGPDVFSGSEDPGVAS). Residues 216–243 (YMVTLLLTCCILPLSVIIICYIFVWNAI) traverse the membrane as a helical segment. Residues 244–265 (HQVAQQQKDSESTQKAEKEVSR) lie on the Cytoplasmic side of the membrane. A helical membrane pass occupies residues 266–289 (MVVVMILAFILCWGPYASFATFSA). Residues 290–297 (LNPGYAWH) lie on the Extracellular side of the membrane. A helical membrane pass occupies residues 298 to 322 (PLAAALPAYFAKSATIYNPIIYVFM). K309 carries the post-translational modification N6-(retinylidene)lysine. Over 323-355 (NRQFRSCIMQLFGKKVEDASEVSGSTTEVSTAS) the chain is Cytoplasmic.

The protein belongs to the G-protein coupled receptor 1 family. Opsin subfamily. The color pigments are found in the cone photoreceptor cells.

The protein resides in the membrane. Functionally, visual pigments are the light-absorbing molecules that mediate vision. They consist of an apoprotein, opsin, covalently linked to cis-retinal. The chain is Green-sensitive opsin-1 (G103) from Psalidodon fasciatus (Banded astyanax).